The chain runs to 457 residues: Multidrug resistance protein MdtK (457 aa).

12 consecutive transmembrane segments (helical) span residues 11-31 (LLALAIPVVIAQLSQTAMGVV), 46-66 (AVAVGTSIWLPAILFGHGLLL), 93-113 (WLAFCVSVLIMVVIYNSDHII), 127-147 (AVGFLHAIMWGAPGYLFFQVL), 160-180 (GMVIGFIGLLVNIPINYIFIY), 188-208 (LGGVGCGVATGTVYWVMFLMM), 243-263 (LPVALALFFEVTLFAVVALLV), 278-300 (LNFSSLMFMLPMSLSVAATIRVG), 316-336 (YTSIAVGLMLACVTAIFTVVF), 350-370 (VVVMASHLMLLAALYQLSDAI), 387-407 (IFFITFTAYWLLGLPSGYLLG), and 418-438 (PSGFWIGFVIGLTSAAILMAL).

The protein belongs to the multi antimicrobial extrusion (MATE) (TC 2.A.66.1) family. MdtK subfamily.

The protein resides in the cell inner membrane. Functionally, multidrug efflux pump that functions probably as a Na(+)/drug antiporter. The polypeptide is Multidrug resistance protein MdtK (Yersinia enterocolitica serotype O:8 / biotype 1B (strain NCTC 13174 / 8081)).